Here is a 272-residue protein sequence, read N- to C-terminus: NADPH-dependent 7-cyano-7-deazaguanine reductase (272 aa).

82 to 84 (IES) is a binding site for substrate. 84–85 (SK) is an NADPH binding site. C178 (thioimide intermediate) is an active-site residue. Residue D185 is the Proton donor of the active site. 217–218 (HE) is a binding site for substrate. 246–247 (RG) is a binding site for NADPH.

It belongs to the GTP cyclohydrolase I family. QueF type 2 subfamily. Homodimer.

The protein resides in the cytoplasm. The enzyme catalyses 7-aminomethyl-7-carbaguanine + 2 NADP(+) = 7-cyano-7-deazaguanine + 2 NADPH + 3 H(+). It participates in tRNA modification; tRNA-queuosine biosynthesis. Its function is as follows. Catalyzes the NADPH-dependent reduction of 7-cyano-7-deazaguanine (preQ0) to 7-aminomethyl-7-deazaguanine (preQ1). This chain is NADPH-dependent 7-cyano-7-deazaguanine reductase, found in Stenotrophomonas maltophilia (strain K279a).